Reading from the N-terminus, the 420-residue chain is Septin-8-A (420 aa).

The region spanning 39-305 (QGFCFNILCV…ELYRRCKLEE (267 aa)) is the Septin-type G domain. A G1 motif region spans residues 49-56 (GETGIGKS). Residues 49–56 (GETGIGKS), Gly104, 185–193 (KADTISKSE), Gly239, and Arg254 contribute to the GTP site. The tract at residues 101 to 104 (DTVG) is G3 motif. Residues 184–187 (AKAD) are G4 motif. A coiled-coil region spans residues 321–407 (QETYEAKRKE…RRKVAAETLS (87 aa)). A disordered region spans residues 393–420 (MNAFNRRKVAAETLSLSQPLKKDKDKKN).

The protein belongs to the TRAFAC class TrmE-Era-EngA-EngB-Septin-like GTPase superfamily. Septin GTPase family.

In Danio rerio (Zebrafish), this protein is Septin-8-A (sept8a).